Here is a 192-residue protein sequence, read N- to C-terminus: uncharacterized protein (192 aa).

It to M.thermoautotrophicum MTH863.

This is an uncharacterized protein from Methanocaldococcus jannaschii (strain ATCC 43067 / DSM 2661 / JAL-1 / JCM 10045 / NBRC 100440) (Methanococcus jannaschii).